Reading from the N-terminus, the 341-residue chain is Dye-decolorizing peroxidase (341 aa).

D148 functions as the Proton acceptor in the catalytic mechanism. H221 contributes to the heme binding site. A targeting peptide region spans residues 304–341 (FLDDPPDAPTRLVPEATFTAPISDGSLGIGSLKRSAQQ).

Belongs to the DyP-type peroxidase family. As to quaternary structure, homohexamer. The cofactor is heme b.

The protein localises to the encapsulin nanocompartment. In terms of biological role, cargo protein of a type 1 encapsulin nanocompartment. Has both general peroxidase activity and dye-decolorizing activity. Can catalyze the oxidation of both protoporphyrinogen IX and coproporphyrinogen III to their corresponding porphyrins. Also efficiently decolorizes the dyes alizarin red and Cibacron blue F3GA. This cargo-loaded encapsulin nanocompartment is probably involved in protection against oxidative damage. The polypeptide is Dye-decolorizing peroxidase (Rhodococcus erythropolis (strain PR4 / NBRC 100887)).